Here is a 177-residue protein sequence, read N- to C-terminus: Large ribosomal subunit protein uL6 (177 aa).

This sequence belongs to the universal ribosomal protein uL6 family. As to quaternary structure, part of the 50S ribosomal subunit.

In terms of biological role, this protein binds to the 23S rRNA, and is important in its secondary structure. It is located near the subunit interface in the base of the L7/L12 stalk, and near the tRNA binding site of the peptidyltransferase center. The polypeptide is Large ribosomal subunit protein uL6 (Novosphingobium aromaticivorans (strain ATCC 700278 / DSM 12444 / CCUG 56034 / CIP 105152 / NBRC 16084 / F199)).